The chain runs to 446 residues: Transcription factor Sox-10 (446 aa).

Disordered regions lie at residues 1 to 60 (MSDD…SEDE), 153 to 191 (RLRMQHKKDHPDYKYQPRRRKNGKPSPGEGDGSSEAEGG), and 203 to 264 (HLDH…IDFG). The span at 36 to 48 (DDDDDDDEEEEEE) shows a compositional bias: acidic residues. A Glycyl lysine isopeptide (Lys-Gly) (interchain with G-Cter in SUMO) cross-link involves residue K52. The interval 56-96 (DSEDERFPVCIREAVSQVLNGYDWTLVPMPVRVNGGSKSKP) is dimerization (DIM). The HMG box DNA-binding region spans 98–166 (VKRPMNAFMV…QHKKDHPDYK (69 aa)). Over residues 153–167 (RLRMQHKKDHPDYKY) the composition is skewed to basic and acidic residues. Over residues 213 to 226 (SDGNSEHSTGQSHG) the composition is skewed to polar residues. The interval 217–303 (SEHSTGQSHG…NGHAGHPSHI (87 aa)) is transactivation domain (TAM). Residues 243-257 (SDGKRDGSHALREGG) show a composition bias toward basic and acidic residues. Residues 337–446 (KAQVKTESSS…QPVYTTLSRP (110 aa)) are transactivation domain (TAC). K341 is covalently cross-linked (Glycyl lysine isopeptide (Lys-Gly) (interchain with G-Cter in SUMO)). The interval 421–446 (SDPPSVAQSHSPTHWEQPVYTTLSRP) is disordered. The span at 426–446 (VAQSHSPTHWEQPVYTTLSRP) shows a compositional bias: polar residues.

In terms of assembly, interacts with the sumoylation factors ube2i/ubc9 and sumo1. Post-translationally, sumoylated. In terms of tissue distribution, first expressed at stages 13/14 at the lateral edges of the neural plate, in the neural crest forming region. By stage 22, neural crest cells migrate in the cranial region and strong expression is seen in the crest cells that populate the branchial arches as well as those migrating in the frontonasal region. Also strongly expressed in the trunk neural crest. Expression in the otic vesicle begins around stage 25 and persists until at least stage 40. At stage 30, expression is down-regulated in the cranial neural crest of the pharyngeal arches but persists in the trunk neural crest, in the otic vesicle and in discrete domains adjacent to the hindbrain. At stage 40, expression is restricted to the otic vesicle, differentiated pigment cells, and in several cranial ganglia.

The protein localises to the cytoplasm. The protein resides in the nucleus. Its function is as follows. Acts early in neural crest formation, functioning redundantly with the other group E Sox factors sox8 and sox9 to induce neural crest progenitors. Acts downstream of wnt-signaling at the neural plate border. Involved in the specification of neural crest progenitors fated to form the pigment cell lineage. The protein is Transcription factor Sox-10 (sox10) of Xenopus laevis (African clawed frog).